Here is a 117-residue protein sequence, read N- to C-terminus: Large ribosomal subunit protein bL20c (117 aa).

The protein belongs to the bacterial ribosomal protein bL20 family.

Its subcellular location is the plastid. The protein localises to the chloroplast. Binds directly to 23S ribosomal RNA and is necessary for the in vitro assembly process of the 50S ribosomal subunit. It is not involved in the protein synthesizing functions of that subunit. The polypeptide is Large ribosomal subunit protein bL20c (Nasturtium officinale (Watercress)).